Here is a 435-residue protein sequence, read N- to C-terminus: MNIKNILWFTLKKLSNLSLSISLLLLIASISIIGTIIEQNQSIVYYQMNYPINNQPFGRIMNWKIILNLGLDHIYLNPCFVLVLVLFFCSLLACTFSNQLPSLRNARKWKFLQYKNHINCNNHFVELDKISICNIIYSLYSNNYYIFHKENNIYAYKGLSGRIAPIVVHFSIILTFIGSLISLLGGFTAQEIIPTGEIFHIKNIIQSGFNSEIPNNITGKIKDFDIKYGPDNSVEQFVSKIIIYNNQGKNINQKQVSVNSPLILKGITFYQTDWKIDTLRFKIGNSKIIQQPIIKYKINNQILWSCRLPLNKEKYIFLVIANLNDKISIYDISNNLLTSIKLDETIVVNNTTLKIVEIMTKTGIQVKTDPGIIVTYTGFFILMLSIVISYISYSQIWVTSIIQNIKIAGSTNRATLTFEEEIINIQEIYTQYTWS.

3 helical membrane passes run 17–37 (LSLSISLLLLIASISIIGTII), 77–97 (NPCFVLVLVLFFCSLLACTFS), and 163–183 (IAPIVVHFSIILTFIGSLISL).

This sequence belongs to the Ccs1/CcsB family. As to quaternary structure, may interact with CcsA.

The protein resides in the plastid. It localises to the chloroplast thylakoid membrane. Required during biogenesis of c-type cytochromes (cytochrome c6 and cytochrome f) at the step of heme attachment. The chain is Cytochrome c biogenesis protein Ccs1 from Gracilaria tenuistipitata var. liui (Red alga).